The chain runs to 145 residues: Large ribosomal subunit protein uL24 (145 aa).

Disordered stretches follow at residues 1-21 and 122-145; these read MKFN…HFNA and KAKS…KMQE. Residue Lys-136 forms a Glycyl lysine isopeptide (Lys-Gly) (interchain with G-Cter in SUMO2) linkage. Phosphothreonine is present on Thr-139.

This sequence belongs to the universal ribosomal protein uL24 family. As to quaternary structure, component of the large ribosomal subunit. Interacts with DHX33. Post-translationally, ufmylated by UFL1 in response to endoplasmic reticulum stress, promoting reticulophagy of endoplasmic reticulum sheets.

The protein localises to the cytoplasm. In terms of biological role, component of the large ribosomal subunit. The ribosome is a large ribonucleoprotein complex responsible for the synthesis of proteins in the cell. The chain is Large ribosomal subunit protein uL24 (Rpl26) from Rattus norvegicus (Rat).